We begin with the raw amino-acid sequence, 394 residues long: Elongation factor Tu (394 aa).

The tr-type G domain maps to 10–204 (KPHVNVGTIG…ALDTYIPEPE (195 aa)). The segment at 19 to 26 (GHVDHGKT) is G1. A GTP-binding site is contributed by 19–26 (GHVDHGKT). Thr-26 is a Mg(2+) binding site. The interval 60–64 (GITIN) is G2. The G3 stretch occupies residues 81–84 (DCPG). Residues 81–85 (DCPGH) and 136–139 (NKCD) each bind GTP. The segment at 136–139 (NKCD) is G4. Residues 174–176 (SAL) form a G5 region.

This sequence belongs to the TRAFAC class translation factor GTPase superfamily. Classic translation factor GTPase family. EF-Tu/EF-1A subfamily. Monomer.

The protein resides in the cytoplasm. It catalyses the reaction GTP + H2O = GDP + phosphate + H(+). Functionally, GTP hydrolase that promotes the GTP-dependent binding of aminoacyl-tRNA to the A-site of ribosomes during protein biosynthesis. This Shewanella pealeana (strain ATCC 700345 / ANG-SQ1) protein is Elongation factor Tu.